We begin with the raw amino-acid sequence, 217 residues long: Large ribosomal subunit protein uL4 (217 aa).

The interval 46-103 (KRQGTHATKTRGMVSGGGRKPFRQKGTGRARQGSIRAPHFTGGGTVHGPQPRDYSQRT) is disordered.

Belongs to the universal ribosomal protein uL4 family. As to quaternary structure, part of the 50S ribosomal subunit.

One of the primary rRNA binding proteins, this protein initially binds near the 5'-end of the 23S rRNA. It is important during the early stages of 50S assembly. It makes multiple contacts with different domains of the 23S rRNA in the assembled 50S subunit and ribosome. Its function is as follows. Forms part of the polypeptide exit tunnel. In Corynebacterium jeikeium (strain K411), this protein is Large ribosomal subunit protein uL4.